The following is a 245-amino-acid chain: 1-(5-phosphoribosyl)-5-[(5-phosphoribosylamino)methylideneamino] imidazole-4-carboxamide isomerase 1 (245 aa).

Asp-7 functions as the Proton acceptor in the catalytic mechanism. Catalysis depends on Asp-129, which acts as the Proton donor.

This sequence belongs to the HisA/HisF family.

It localises to the cytoplasm. The enzyme catalyses 1-(5-phospho-beta-D-ribosyl)-5-[(5-phospho-beta-D-ribosylamino)methylideneamino]imidazole-4-carboxamide = 5-[(5-phospho-1-deoxy-D-ribulos-1-ylimino)methylamino]-1-(5-phospho-beta-D-ribosyl)imidazole-4-carboxamide. The protein operates within amino-acid biosynthesis; L-histidine biosynthesis; L-histidine from 5-phospho-alpha-D-ribose 1-diphosphate: step 4/9. The protein is 1-(5-phosphoribosyl)-5-[(5-phosphoribosylamino)methylideneamino] imidazole-4-carboxamide isomerase 1 (hisA1) of Photorhabdus laumondii subsp. laumondii (strain DSM 15139 / CIP 105565 / TT01) (Photorhabdus luminescens subsp. laumondii).